We begin with the raw amino-acid sequence, 245 residues long: Haloacid dehalogenase-like hydrolase domain-containing protein At2g33255 (245 aa).

T2 is modified (N-acetylalanine). D39 acts as the Nucleophile in catalysis. Mg(2+) is bound by residues D39, D41, and D186. D41 (proton donor) is an active-site residue.

This sequence belongs to the HAD-like hydrolase superfamily. DOG/GPP family. Mg(2+) is required as a cofactor.

The polypeptide is Haloacid dehalogenase-like hydrolase domain-containing protein At2g33255 (Arabidopsis thaliana (Mouse-ear cress)).